The chain runs to 429 residues: Histidine--tRNA ligase (429 aa).

It belongs to the class-II aminoacyl-tRNA synthetase family. As to quaternary structure, homodimer.

It localises to the cytoplasm. It carries out the reaction tRNA(His) + L-histidine + ATP = L-histidyl-tRNA(His) + AMP + diphosphate + H(+). The polypeptide is Histidine--tRNA ligase (Pseudomonas putida (strain GB-1)).